The chain runs to 123 residues: Chaperone protein SycN (123 aa).

Interacts with YscB to form a complex which specifically binds to YopN.

The protein localises to the cytoplasm. It localises to the cell inner membrane. In terms of biological role, functions as a specific chaperone for YopN. It could facilitate the secretion and the subsequent translocation of YopN. The polypeptide is Chaperone protein SycN (sycN) (Yersinia enterocolitica).